A 126-amino-acid polypeptide reads, in one-letter code: Histone H2B 7 (126 aa).

Over residues 1 to 12 (MPEPAKSAPAPK) the composition is skewed to low complexity. The segment at 1–35 (MPEPAKSAPAPKKGSKKAVTKTQKKGDKKRKRARK) is disordered. N6-acetyllysine is present on residues Lys6 and Lys13. Residues 13 to 34 (KGSKKAVTKTQKKGDKKRKRAR) show a composition bias toward basic residues. At Ser15 the chain carries Phosphoserine. N6-acetyllysine occurs at positions 16 and 21. The O-linked (GlcNAc) serine glycan is linked to Ser113. Lys121 participates in a covalent cross-link: Glycyl lysine isopeptide (Lys-Gly) (interchain with G-Cter in ubiquitin).

This sequence belongs to the histone H2B family. In terms of assembly, the nucleosome is a histone octamer containing two molecules each of H2A, H2B, H3 and H4 assembled in one H3-H4 heterotetramer and two H2A-H2B heterodimers. The octamer wraps approximately 147 bp of DNA. Post-translationally, monoubiquitination of Lys-121 by the BRE1 gives a specific tag for epigenetic transcriptional activation and is also prerequisite for histone H3 'Lys-4' and 'Lys-79' methylation. In terms of processing, phosphorylated on Ser-15 during apoptosis; which facilitates apoptotic chromatin condensation. GlcNAcylation at Ser-113 promotes monoubiquitination of Lys-121. It fluctuates in response to extracellular glucose, and associates with transcribed genes.

The protein localises to the nucleus. It localises to the chromosome. Functionally, core component of nucleosome. Nucleosomes wrap and compact DNA into chromatin, limiting DNA accessibility to the cellular machineries which require DNA as a template. Histones thereby play a central role in transcription regulation, DNA repair, DNA replication and chromosomal stability. DNA accessibility is regulated via a complex set of post-translational modifications of histones, also called histone code, and nucleosome remodeling. The sequence is that of Histone H2B 7 (H2B-VII) from Gallus gallus (Chicken).